The following is a 249-amino-acid chain: Triosephosphate isomerase (249 aa).

9–11 (NWK) contributes to the substrate binding site. The active-site Electrophile is His95. Glu165 serves as the catalytic Proton acceptor. Substrate is bound by residues Gly171, Ser211, and 232–233 (GG).

This sequence belongs to the triosephosphate isomerase family. As to quaternary structure, homodimer.

The protein resides in the cytoplasm. It carries out the reaction D-glyceraldehyde 3-phosphate = dihydroxyacetone phosphate. It functions in the pathway carbohydrate biosynthesis; gluconeogenesis. It participates in carbohydrate degradation; glycolysis; D-glyceraldehyde 3-phosphate from glycerone phosphate: step 1/1. In terms of biological role, involved in the gluconeogenesis. Catalyzes stereospecifically the conversion of dihydroxyacetone phosphate (DHAP) to D-glyceraldehyde-3-phosphate (G3P). The polypeptide is Triosephosphate isomerase (Chlorobium phaeobacteroides (strain DSM 266 / SMG 266 / 2430)).